Consider the following 144-residue polypeptide: Large ribosomal subunit protein uL13 (144 aa).

It belongs to the universal ribosomal protein uL13 family. In terms of assembly, part of the 50S ribosomal subunit.

Its function is as follows. This protein is one of the early assembly proteins of the 50S ribosomal subunit, although it is not seen to bind rRNA by itself. It is important during the early stages of 50S assembly. This is Large ribosomal subunit protein uL13 from Herpetosiphon aurantiacus (strain ATCC 23779 / DSM 785 / 114-95).